Reading from the N-terminus, the 352-residue chain is Protein RecA (352 aa).

67–74 lines the ATP pocket; sequence GPESSGKT.

Belongs to the RecA family.

It localises to the cytoplasm. Can catalyze the hydrolysis of ATP in the presence of single-stranded DNA, the ATP-dependent uptake of single-stranded DNA by duplex DNA, and the ATP-dependent hybridization of homologous single-stranded DNAs. It interacts with LexA causing its activation and leading to its autocatalytic cleavage. This Klebsiella pneumoniae subsp. pneumoniae (strain ATCC 700721 / MGH 78578) protein is Protein RecA.